Consider the following 284-residue polypeptide: Hemin import ATP-binding protein HmuV (284 aa).

Residues 33–266 (LGARHLSKSY…KLLSDVYSYE (234 aa)) enclose the ABC transporter domain. 65-72 (GPNGAGKS) contributes to the ATP binding site.

It belongs to the ABC transporter superfamily. Heme (hemin) importer (TC 3.A.1.14.5) family. In terms of assembly, the complex is composed of two ATP-binding proteins (HmuV), two transmembrane proteins (HmuU) and a solute-binding protein (HmuT).

It localises to the cell membrane. Its function is as follows. Part of the ABC transporter complex HmuTUV involved in hemin import. Responsible for energy coupling to the transport system. The protein is Hemin import ATP-binding protein HmuV of Thermobifida fusca (strain YX).